Consider the following 465-residue polypeptide: Mothers against decapentaplegic homolog 1 (465 aa).

Positions 12-136 (PAVKRLLGWK…YKRVESPVLP (125 aa)) constitute an MH1 domain. Positions 64, 109, 121, and 126 each coordinate Zn(2+). The tract at residues 161–240 (QNEPHMPHNA…EDQMTHDTSQ (80 aa)) is disordered. The span at 179-210 (PNSHPFPHSPNSSYPNSPGSSSSTYPHSPASS) shows a compositional bias: low complexity. The region spanning 271 to 465 (WCSIVYYELN…SPHNPISSVS (195 aa)) is the MH2 domain. A phosphoserine mark is found at serine 463 and serine 465.

Belongs to the dwarfin/SMAD family. In terms of assembly, found in a complex with SMAD4 and YY1. Interacts with HGS, NANOG and ZCCHC12. Upon C-terminus phosphorylation: forms trimers with another SMAD1 and the co-SMAD SMAD4. Interacts with PEBP2-alpha subunit, CREB-binding protein (CBP), p300, SMURF1, SMURF2, USP15 and HOXC8. Associates with ZNF423 or ZNF521 in response to BMP2 leading to activate transcription of BMP target genes. Interacts with SKOR1. Interacts (via MH2 domain) with LEMD3. Binding to LEMD3 results in at least a partial reduction of receptor-mediated phosphorylation. Forms a ternary complex with PSMB4 and OAZ1 before PSMB4 is incorporated into the 20S proteasome. Found in a macromolecular complex with FAM83G. Interacts (via MH2 domain) with FAM83G (via MH2 domain); in a SMAD4-independent manner. Interacts with ZC3H3. Interacts with TMEM119. Interacts (via MH1 and MH2 domains) with ZNF8. Interacts with RANBP3L; the interaction increases when SMAD1 is not phosphorylated and mediates SMAD1 nuclear export. Interacts with EGR1; this interaction inhibits SMAD1 dephosphorylation. Interacts with SMAD6. Interacts with YAP1. Phosphorylation of the C-terminal SVS motif by BMP type 1 receptor kinase activates SMAD1 by promoting dissociation from the receptor and trimerization with SMAD4. Phosphorylation by ERK2 MAP kinase in response to EGF or HGF prevents SMAD1 nuclear accumulation and transcriptional activity in response to BMP. Dephosphorylation, probably by PPM1A, induces its export from the nucleus to the cytoplasm. Dephosphorylation is inhibited by association with EGR1. Phosphorylation by CDK8/9 creates binding sites for YAP1, and subsequent phosphorylation by GSK3 switches off YAP1 binding and adds binding sites for SMURF1. Post-translationally, ubiquitinated by SMAD-specific E3 ubiquitin ligase SMURF1, leading to its degradation. Monoubiquitinated, leading to prevent DNA-binding. Deubiquitination by USP15 alleviates inhibition and promotes activation of TGF-beta target genes. Dephosphorylation, probably by PPM1A, induces its export from the nucleus to the cytoplasm. Phospho-SMAD1 is ubiquitinated by CHIP leading to disruption of the SMAD1-SMAD4 complex.

It localises to the cytoplasm. The protein resides in the nucleus. In terms of biological role, transcriptional modulator that plays a role in various cellular processes, including embryonic development, cell differentiation, and tissue homeostasis. Upon BMP ligand binding to their receptors at the cell surface, is phosphorylated by activated type I BMP receptors (BMPRIs) and associates with SMAD4 to form an heteromeric complex which translocates into the nucleus acting as transcription factor. In turn, the hetero-trimeric complex recognizes cis-regulatory elements containing Smad Binding Elements (SBEs) to modulate the outcome of the signaling network. SMAD1/OAZ1/PSMB4 complex mediates the degradation of the CREBBP/EP300 repressor SNIP1. The protein is Mothers against decapentaplegic homolog 1 (SMAD1) of Coturnix japonica (Japanese quail).